The following is a 1198-amino-acid chain: Fibronectin type-III domain-containing protein 3A (1198 aa).

Over residues 188–201 the composition is skewed to basic and acidic residues; that stretch reads KKLKDRQGTQKDKM. The tract at residues 188–257 is disordered; the sequence is KKLKDRQGTQ…VDPEMEEKDE (70 aa). Phosphoserine is present on residues Ser-203, Ser-207, and Ser-213. Fibronectin type-III domains lie at 268–369, 373–465, 469–562, 566–660, 664–757, 761–851, 863–950, 951–1045, and 1049–1151; these read NIVK…TLSC, PPNA…TSGC, VPAS…TCPD, VPVK…TPAV, PCLP…TAPG, QCRP…TPPS, SDDD…TKPL, PPDP…TPKS, and ALKA…TEPP. The residue at position 384 (Lys-384) is an N6-acetyllysine. The helical transmembrane segment at 1177 to 1197 threads the bilayer; that stretch reads ILVVFAFFSILIAFIIQYFVI.

Belongs to the FNDC3 family. In terms of tissue distribution, testis. Localizes to the acrosome of spermatids, as well as to Leydig cells. Can be detected on the acrosome beginning at steps 2-3 and continuing until step 12 of spermiogenesis.

It localises to the golgi apparatus membrane. In terms of biological role, mediates spermatid-Sertoli adhesion during spermatogenesis. The chain is Fibronectin type-III domain-containing protein 3A (Fndc3a) from Mus musculus (Mouse).